The chain runs to 123 residues: Heat-labile enterotoxin IIA, B chain (123 aa).

The N-terminal stretch at Met-1–Gly-19 is a signal peptide. Cys-33 and Cys-104 are disulfide-bonded.

As to quaternary structure, heterohexamer of one A chain and of five B chains.

Functionally, the biological activity of the toxin is produced by the A chain, which activates intracellular adenyl cyclase. This is Heat-labile enterotoxin IIA, B chain from Escherichia coli.